Reading from the N-terminus, the 493-residue chain is Glutathione hydrolase 6 (493 aa).

Over 1-54 (MERAEEPVVYQKLLPWEPSLESEEEVEEEETSEALVLNPRRHQDSSRNKAGGLP) the chain is Cytoplasmic. The disordered stretch occupies residues 19 to 52 (SLESEEEVEEEETSEALVLNPRRHQDSSRNKAGG). The segment covering 20–32 (LESEEEVEEEETS) has biased composition (acidic residues). A helical; Signal-anchor for type II membrane protein membrane pass occupies residues 55–75 (GTWARVVAALLLLAVGCSLAV). Residues 76–493 (RQLQNQGRST…PHACCPFQGF (418 aa)) lie on the Extracellular side of the membrane. Residues 83-105 (RSTGSLGSVAPPPGGHSHGPGVY) are disordered. N-linked (GlcNAc...) asparagine glycans are attached at residues Asn161 and Asn370. Over residues 442–455 (PPTQAQHQHQGQQE) the composition is skewed to low complexity. Positions 442-464 (PPTQAQHQHQGQQEPTEHPSTCG) are disordered.

The protein belongs to the gamma-glutamyltransferase family. In terms of assembly, heterodimer composed of the light and heavy chains. The active site is located in the light chain. Cleaved by autocatalysis into a large and a small subunit and the autocatalytic cleavage is essential to the functional activation of the enzyme.

Its subcellular location is the membrane. The enzyme catalyses an N-terminal (5-L-glutamyl)-[peptide] + an alpha-amino acid = 5-L-glutamyl amino acid + an N-terminal L-alpha-aminoacyl-[peptide]. The catalysed reaction is glutathione + H2O = L-cysteinylglycine + L-glutamate. It catalyses the reaction an S-substituted glutathione + H2O = an S-substituted L-cysteinylglycine + L-glutamate. It functions in the pathway sulfur metabolism; glutathione metabolism. Hydrolyzes and transfers gamma-glutamyl moieties from glutathione and other gamma-glutamyl compounds to acceptors. This is Glutathione hydrolase 6 from Homo sapiens (Human).